The chain runs to 182 residues: Capsid protein (182 aa).

Residues 1-25 (MSSAAQPMSRRARRRAARRALGSQP) are disordered.

Its subcellular location is the virion. In terms of biological role, capsid protein self-assembles to form a quasi-spherical capsid, about 26 nm, or bacilliform. The polypeptide is Capsid protein (Olive latent virus 2 (isolate Italy) (OLV-2)).